Consider the following 330-residue polypeptide: Pseudouridine-5'-phosphate glycosidase (330 aa).

Glu-50 (proton donor) is an active-site residue. Substrate-binding residues include Lys-112 and Val-132. A Mn(2+)-binding site is contributed by Asp-164. 166–168 is a binding site for substrate; the sequence is SSD. Catalysis depends on Lys-185, which acts as the Nucleophile.

The protein belongs to the pseudouridine-5'-phosphate glycosidase family. Homotrimer. Mn(2+) is required as a cofactor.

It is found in the peroxisome. It carries out the reaction D-ribose 5-phosphate + uracil = psi-UMP + H2O. In terms of biological role, catalyzes the reversible cleavage of pseudouridine 5'-phosphate (PsiMP) to ribose 5-phosphate and uracil. Functions biologically in the cleavage direction, as part of a pseudouridine degradation pathway. Acts together with the pseudouridine kinase PUKI in the peroxisome to prevent toxic pseudouridine monophosphate accumulation. Can catalyze the formation of pseudouridine 5'-phosphate (reverse reaction) in vitro, with a catalytic efficiency 4 times lower than the hydrolysis reaction. This is Pseudouridine-5'-phosphate glycosidase from Arabidopsis thaliana (Mouse-ear cress).